The chain runs to 312 residues: 4-hydroxy-3-methylbut-2-enyl diphosphate reductase (312 aa).

Cysteine 15 provides a ligand contact to [4Fe-4S] cluster. The (2E)-4-hydroxy-3-methylbut-2-enyl diphosphate site is built by histidine 44 and histidine 77. Histidine 44 and histidine 77 together coordinate dimethylallyl diphosphate. Positions 44 and 77 each coordinate isopentenyl diphosphate. Position 99 (cysteine 99) interacts with [4Fe-4S] cluster. Residue histidine 127 coordinates (2E)-4-hydroxy-3-methylbut-2-enyl diphosphate. Histidine 127 serves as a coordination point for dimethylallyl diphosphate. Histidine 127 contributes to the isopentenyl diphosphate binding site. Residue glutamate 129 is the Proton donor of the active site. Threonine 167 contacts (2E)-4-hydroxy-3-methylbut-2-enyl diphosphate. A [4Fe-4S] cluster-binding site is contributed by cysteine 197. (2E)-4-hydroxy-3-methylbut-2-enyl diphosphate is bound by residues serine 225, serine 226, asparagine 227, and serine 269. Dimethylallyl diphosphate is bound by residues serine 225, serine 226, asparagine 227, and serine 269. Isopentenyl diphosphate-binding residues include serine 225, serine 226, asparagine 227, and serine 269.

This sequence belongs to the IspH family. It depends on [4Fe-4S] cluster as a cofactor.

The catalysed reaction is isopentenyl diphosphate + 2 oxidized [2Fe-2S]-[ferredoxin] + H2O = (2E)-4-hydroxy-3-methylbut-2-enyl diphosphate + 2 reduced [2Fe-2S]-[ferredoxin] + 2 H(+). The enzyme catalyses dimethylallyl diphosphate + 2 oxidized [2Fe-2S]-[ferredoxin] + H2O = (2E)-4-hydroxy-3-methylbut-2-enyl diphosphate + 2 reduced [2Fe-2S]-[ferredoxin] + 2 H(+). It functions in the pathway isoprenoid biosynthesis; dimethylallyl diphosphate biosynthesis; dimethylallyl diphosphate from (2E)-4-hydroxy-3-methylbutenyl diphosphate: step 1/1. It participates in isoprenoid biosynthesis; isopentenyl diphosphate biosynthesis via DXP pathway; isopentenyl diphosphate from 1-deoxy-D-xylulose 5-phosphate: step 6/6. Functionally, catalyzes the conversion of 1-hydroxy-2-methyl-2-(E)-butenyl 4-diphosphate (HMBPP) into a mixture of isopentenyl diphosphate (IPP) and dimethylallyl diphosphate (DMAPP). Acts in the terminal step of the DOXP/MEP pathway for isoprenoid precursor biosynthesis. The protein is 4-hydroxy-3-methylbut-2-enyl diphosphate reductase of Aromatoleum aromaticum (strain DSM 19018 / LMG 30748 / EbN1) (Azoarcus sp. (strain EbN1)).